Here is a 259-residue protein sequence, read N- to C-terminus: Undecaprenyl-diphosphatase 4 (259 aa).

8 helical membrane-spanning segments follow: residues 1–21 (MNWLEAFILGIIQGLTEFLPI), 39–59 (AGLFLDTMLHIGTLLAVFIYY), 71–91 (FSKLMLLLIVGTIPAVVIGLL), 99–119 (ISKTGITIGWEFLVTGFFLYM), 133–153 (ITYKDAFIIGSFQAAAIFPAI), 173–193 (AAYFSFLLSTPAIVGAIILQF), 208–228 (SLIVGTLSAAFFGYIAVSWMI), and 239–259 (FAYYVWGLGIIIITLQYTHVF).

It belongs to the UppP family.

The protein resides in the cell membrane. The enzyme catalyses di-trans,octa-cis-undecaprenyl diphosphate + H2O = di-trans,octa-cis-undecaprenyl phosphate + phosphate + H(+). Catalyzes the dephosphorylation of undecaprenyl diphosphate (UPP). Confers resistance to bacitracin. This is Undecaprenyl-diphosphatase 4 from Bacillus thuringiensis (strain Al Hakam).